Here is a 241-residue protein sequence, read N- to C-terminus: Capsid protein (241 aa).

The Bipartite nuclear localization signal signature appears at 1 to 26; it reads MSPASSWKRKRPSSSSAQASKKRRVY. A disordered region spans residues 1-30; sequence MSPASSWKRKRPSSSSAQASKKRRVYRPAV.

It belongs to the geminiviridae capsid protein family. As to quaternary structure, homomultimer. Interacts with the movement protein. Binds to single-stranded and double-stranded viral DNA.

The protein resides in the virion. The protein localises to the host nucleus. Encapsidates the viral genome into characteristic twinned ('geminate') particles. Binds the genomic viral ssDNA and shuttles it into and out of the cell nucleus. Plays a role in protection of the genome from degradation, virus acquisition and transmission by insect vectors, infectivity, and systemic movement. The CP of monopartite geminiviruses is absolutely essential for virus movement. This chain is Capsid protein, found in Avena sativa (Oat).